The sequence spans 212 residues: MTDLSDIRREYAKGGLRRADLPQNPMDLFALWMTQARDAELSDPTAMCVATVDEQGQPFQRIVLLKRFDDTGFVFFTNLGSRKAQQIAANNKVSLHFPWHPLERQVSVLGEAQALSTTEVLKYFMTRPKDSQIAAWVSQQSSKLSARQVLEGKFFEMKAKFAKGDVPLPSFWGGYLVRPKSIEFWQGGEHRLHDRFIYTRDNTQWIIDRLAP.

Residues 8-11 (RREY) and lysine 66 contribute to the substrate site. FMN is bound by residues 61-66 (RIVLLK), 76-77 (FT), arginine 82, lysine 83, and glutamine 105. 3 residues coordinate substrate: tyrosine 123, arginine 127, and serine 131. FMN is bound by residues 140-141 (QS) and tryptophan 185. Substrate is bound at residue 191–193 (RLH). Arginine 195 serves as a coordination point for FMN.

It belongs to the pyridoxamine 5'-phosphate oxidase family. Homodimer. FMN is required as a cofactor.

The enzyme catalyses pyridoxamine 5'-phosphate + O2 + H2O = pyridoxal 5'-phosphate + H2O2 + NH4(+). It carries out the reaction pyridoxine 5'-phosphate + O2 = pyridoxal 5'-phosphate + H2O2. Its pathway is cofactor metabolism; pyridoxal 5'-phosphate salvage; pyridoxal 5'-phosphate from pyridoxamine 5'-phosphate: step 1/1. It functions in the pathway cofactor metabolism; pyridoxal 5'-phosphate salvage; pyridoxal 5'-phosphate from pyridoxine 5'-phosphate: step 1/1. Functionally, catalyzes the oxidation of either pyridoxine 5'-phosphate (PNP) or pyridoxamine 5'-phosphate (PMP) into pyridoxal 5'-phosphate (PLP). The chain is Pyridoxine/pyridoxamine 5'-phosphate oxidase from Shewanella sp. (strain W3-18-1).